Consider the following 457-residue polypeptide: Mesentericin Y105 secretion protein MesE (457 aa).

Residues 22–42 (TLIIVPIFLLVVFIVLFSLFA) traverse the membrane as a helical segment.

Belongs to the membrane fusion protein (MFP) (TC 8.A.1) family.

It is found in the membrane. Involved in the secretion of mesentericin Y105. The sequence is that of Mesentericin Y105 secretion protein MesE (mesE) from Leuconostoc mesenteroides.